A 279-amino-acid polypeptide reads, in one-letter code: MQIIRDIAMLHRAVTALKQGGKSIALVPTMGALHAGHLSLVRMAKRVADHVVVSIFVNPTQFGPNEDFAAYPRDEARDAALLVEEGTSLLWAPDVGTMYPGGHSTHVEVAELGADYCGAARPGHFDGVATVVAKLFNQVRPDIAIFGEKDWQQLAIIRRMARDLDFGIDILGAPIAREADGLALSSRNAYLSAEQRTAAAAFPGALKTAAKAIADGADVAETLARAEAAIVGGGFDSVDYVALADADSLERLAVFRAPARLLAAARIGRTRLIDNLPVG.

30-37 (MGALHAGH) is a binding site for ATP. H37 acts as the Proton donor in catalysis. Residue Q61 coordinates (R)-pantoate. Residue Q61 participates in beta-alanine binding. 147-150 (GEKD) serves as a coordination point for ATP. (R)-pantoate is bound at residue Q153. Residues A176 and 184–187 (LSSR) contribute to the ATP site.

This sequence belongs to the pantothenate synthetase family. In terms of assembly, homodimer.

The protein resides in the cytoplasm. It catalyses the reaction (R)-pantoate + beta-alanine + ATP = (R)-pantothenate + AMP + diphosphate + H(+). Its pathway is cofactor biosynthesis; (R)-pantothenate biosynthesis; (R)-pantothenate from (R)-pantoate and beta-alanine: step 1/1. Catalyzes the condensation of pantoate with beta-alanine in an ATP-dependent reaction via a pantoyl-adenylate intermediate. The chain is Pantothenate synthetase from Sphingopyxis alaskensis (strain DSM 13593 / LMG 18877 / RB2256) (Sphingomonas alaskensis).